Here is a 309-residue protein sequence, read N- to C-terminus: Methyltransferase AacuQ (309 aa).

The tract at residues 57-149 is methyltransferase domain; that stretch reads DVGAGNGPYA…QLRPGGTFAC (93 aa).

It belongs to the methyltransferase superfamily.

Its pathway is secondary metabolite biosynthesis. Methyltransferase; part of the gene cluster that mediates the biosynthesis of the tetrahydroxanthone dimer secalonic acid D. The pathway begins with the synthesis of atrochrysone thioester by the polyketide synthase AacuL. The atrochrysone carboxyl ACP thioesterase AacuM then breaks the thioester bond and releases the atrochrysone carboxylic acid from AacuL. Atrochrysone carboxylic acid is decarboxylated by the decarboxylase AacuI, and oxidized by the anthrone oxygenase AacuG to yield emodin. Emodin is then reduced to emodin hydroquinone by a yet unidentified oxidoreductase. A-ring reduction by the short chain dehydrogenase AacuN, dehydration by the scytalone dehydratase-like protein AacuK and probable spontaneous re-oxidation, results in overall deoxygenation to chrysophanol. Baeyer-Villiger oxidation by the Baeyer-Villiger monooxygenase (BVMO) AacuH then yields monodictyphenone. Monodictyphenone is transformed into compounds with the tetrahydroxanthone skeleton via methylesterification by the methyltransferase AacuQ, followed by the action of the flavin-dependent monooxygenase AacuC, the isomerase AacuP, and the short chain dehydrogenase/reductase AacuF or AacuD. AacuF and AacuD should accept the same compound as a substrate but perform the ketoreduction with a different stereoselectivity, thus yielding blennolides B and A, respectively. In the final step of the biosynthesis, the cytochrome P450 monooxygenase AacuE accepts blennolide B and/or blennolide A to conduct the dimerization reaction to furnish the tetrahydroxanthone dimers, secalonic acids D, B, and F. The sequence is that of Methyltransferase AacuQ from Aspergillus aculeatus (strain ATCC 16872 / CBS 172.66 / WB 5094).